The primary structure comprises 255 residues: UPF0246 protein Cphy_1568 (255 aa).

It belongs to the UPF0246 family.

The protein is UPF0246 protein Cphy_1568 of Lachnoclostridium phytofermentans (strain ATCC 700394 / DSM 18823 / ISDg) (Clostridium phytofermentans).